The chain runs to 904 residues: MDAGFFRGTSAEQDNRFSNKQKKLLKQLKFAECLEKKVDMSKVNLEVIKPWITKRVTEILGFEDDVVIEFIFNQLEVKNPDSKMMQINLTGFLNGKNAREFMGELWPLLLSAQENIAGIPSAFLELKKEEIKQRQIEQEKLASMKKQDEDKDKRDKEEKESSREKRERSRSPRRRKSRSPSPRRRSSPVRRERKRSHSRSPRHRTKSRSPSPAPEKKEKTPELPEPSVKVKEPSVQEATSTSDILKVPKPEPIPEPKEPSPEKNSKKEKEKEKTRPRSRSRSKSRSRTRSRSPSHTRPRRRHRSRSRSYSPRRRPSPRRRPSPRRRTPPRRMPPPPRHRRSRSPVRRRRRSSASLSGSSSSSSSSRSRSPPKKPPKRTSSPPRKTRRLSPSASPPRRRHRPSPPATPPPKTRHSPTPQQSNRTRKSRVSVSPGRTSGKVTKHKGTEKRESPSPAPKPRKVELSESEEDKGGKMAAADSVQQRRQYRRQNQQSSSDSGSSSSSEDERPKRSHVKNGEVGRRRRHSPSRSASPSPRKRQKETSPRGRRRRSPSPPPTRRRRSPSPAPPPRRRRTPTPPPRRRTPSPPPRRRSPSPRRYSPPIQRRYSPSPPPKRRTASPPPPPKRRASPSPPPKRRVSHSPPPKQRSSPVTKRRSPSLSSKHRKGSSPSRSTREARSPQPNKRHSPSPRPRAPQTSSSPPPVRRGASSSPQRRQSPSPSTRPIRRVSRTPEPKKIKKAASPSPQSVRRVSSSRSVSGSPEPAAKKPPAPPSPVQSQSPSTNWSPAVPVKKAKSPTPSPSPPRNSDQEGGGKKKKKKKDKKHKKDKKHKKHKKHKKEKAVAAAAAAAVTPAAIAAATTTLAQEEPVAAPEPKKETESEAEDNLDDLEKHLREKALRSMRKAQVSPQS.

M1 is modified (N-acetylmethionine). Residues 1–151 (MDAGFFRGTS…ASMKKQDEDK (151 aa)) form a necessary for DNA and RNA-binding region. The segment at 1–156 (MDAGFFRGTS…QDEDKDKRDK (156 aa)) is necessary for mRNA 3'-end cleavage and cytoplasmic accumulation. A Citrulline modification is found at R7. In terms of domain architecture, PWI spans 27 to 126 (QLKFAECLEK…AGIPSAFLEL (100 aa)). Residue K127 forms a Glycyl lysine isopeptide (Lys-Gly) (interchain with G-Cter in SUMO2) linkage. The span at 139–170 (EKLASMKKQDEDKDKRDKEEKESSREKRERSR) shows a compositional bias: basic and acidic residues. The segment at 139 to 904 (EKLASMKKQD…MRKAQVSPQS (766 aa)) is disordered. An N6-acetyllysine modification is found at K140. Residues 171–207 (SPRRRKSRSPSPRRRSSPVRRERKRSHSRSPRHRTKS) show a composition bias toward basic residues. Basic and acidic residues predominate over residues 214–234 (PEKKEKTPELPEPSVKVKEPS). A Phosphothreonine modification is found at T220. A Phosphoserine modification is found at S227. K231 participates in a covalent cross-link: Glycyl lysine isopeptide (Lys-Gly) (interchain with G-Cter in SUMO1); alternate. A Glycyl lysine isopeptide (Lys-Gly) (interchain with G-Cter in SUMO2); alternate cross-link involves residue K231. S234 and S240 each carry phosphoserine. A Phosphothreonine modification is found at T241. Basic and acidic residues predominate over residues 246–275 (KVPKPEPIPEPKEPSPEKNSKKEKEKEKTR). Residue K249 forms a Glycyl lysine isopeptide (Lys-Gly) (interchain with G-Cter in SUMO2) linkage. S260 bears the Phosphoserine mark. Basic residues-rich tracts occupy residues 276–329 (PRSR…RTPP) and 336–351 (PRHRRSRSPVRRRRRS). Residues 300-688 (RRHRSRSRSY…NKRHSPSPRP (389 aa)) form a necessary for speckles and matrix localization region. Residues 352–368 (SASLSGSSSSSSSSRSR) are compositionally biased toward low complexity. Phosphoserine is present on residues S389, S391, S393, and S402. T406 bears the Phosphothreonine mark. S414 carries the post-translational modification Phosphoserine. T416 is modified (phosphothreonine). Phosphoserine is present on residues S420, S429, S431, and S436. The segment covering 428 to 438 (VSVSPGRTSGK) has biased composition (polar residues). Residue K447 forms a Glycyl lysine isopeptide (Lys-Gly) (interchain with G-Cter in SUMO2) linkage. Residues S450 and S452 each carry the phosphoserine modification. K459 is covalently cross-linked (Glycyl lysine isopeptide (Lys-Gly) (interchain with G-Cter in SUMO2)). A phosphoserine mark is found at S463 and S465. A Glycyl lysine isopeptide (Lys-Gly) (interchain with G-Cter in SUMO2) cross-link involves residue K472. A Phosphoserine modification is found at S478. Low complexity predominate over residues 478–501 (SVQQRRQYRRQNQQSSSDSGSSSS). The segment covering 503–518 (EDERPKRSHVKNGEVG) has biased composition (basic and acidic residues). A phosphoserine mark is found at S524, S526, S528, S530, S532, S549, and S551. A compositionally biased stretch (basic residues) spans 533–560 (PRKRQKETSPRGRRRRSPSPPPTRRRRS). A Phosphothreonine modification is found at T555. S560 and S562 each carry phosphoserine. Basic residues predominate over residues 567–592 (PRRRRTPTPPPRRRTPSPPPRRRSPS). 3 positions are modified to phosphothreonine: T572, T574, and T581. S583 carries the phosphoserine modification. The span at 593-605 (PRRYSPPIQRRYS) shows a compositional bias: low complexity. Y596 is subject to Phosphotyrosine. A phosphoserine mark is found at S597, S605, and S607. A Phosphothreonine modification is found at T614. A phosphoserine mark is found at S616, S626, S628, S636, and S638. The span at 621–636 (PKRRASPSPPPKRRVS) shows a compositional bias: basic residues. Over residues 649–663 (TKRRSPSLSSKHRKG) the composition is skewed to basic residues. Phosphoserine is present on residues S694, S695, S696, S705, S707, S713, and S715. Composition is skewed to low complexity over residues 701–719 (RRGASSSPQRRQSPSPSTR) and 736–759 (AASPSPQSVRRVSSSRSVSGSPEP). T718 is subject to Phosphothreonine. A phosphoserine mark is found at S738, S740, S748, S752, S754, S756, S769, S773, S775, and S777. The span at 771–786 (VQSQSPSTNWSPAVPV) shows a compositional bias: low complexity. Residue T778 is modified to Phosphothreonine. 2 positions are modified to phosphoserine: S781 and S791. T793 bears the Phosphothreonine mark. Residues S795, S797, and S802 each carry the phosphoserine modification. The segment covering 809 to 834 (KKKKKKKDKKHKKDKKHKKHKKHKKE) has biased composition (basic residues). Positions 837–866 (VAAAAAAAVTPAAIAAATTTLAQEEPVAAP) are enriched in low complexity. K869 participates in a covalent cross-link: Glycyl lysine isopeptide (Lys-Gly) (interchain with G-Cter in SUMO2). At T872 the chain carries Phosphothreonine. S874 is subject to Phosphoserine. Residues 882–892 (DLEKHLREKAL) show a composition bias toward basic and acidic residues. At S901 the chain carries Phosphoserine.

The protein belongs to the splicing factor SR family. Identified in the spliceosome C complex. Found in a pre-mRNA splicing complex with SFRS4, SFRS5, SNRP70, SNRPA1, SRRM1 and SRRM2. Found in a pre-mRNA exonic splicing enhancer (ESE) complex with SNRP70, SNRPA1, SRRM1 and TRA2B/SFRS10. Component of the minor spliceosome, which splices U12-type introns. Found in a mRNA splicing-dependent exon junction complex (EJC) with DEK, PRPF8, NCBP1, RBM8A, RNPS1, SRRM1 and ALYREF/THOC4. Interacts with DDX39B, CPSF1, RBM8A, RNPS1, and ALYREF/THOC4. Seems to be a compound of RNA export complexes that are released from speckles in a ATP-dependent manner. Phosphorylated on multiple serine and threonine residues by DYRK3 during the G2-to-M transition, after the nuclear-envelope breakdown. Phosphorylation by DYRK3 promotes disassembly of nuclear speckles. Post-translationally, citrullinated by PADI4.

The protein resides in the nucleus matrix. The protein localises to the nucleus speckle. Its function is as follows. Part of pre- and post-splicing multiprotein mRNP complexes. As a component of the minor spliceosome, involved in the splicing of U12-type introns in pre-mRNAs. Involved in numerous pre-mRNA processing events. Promotes constitutive and exonic splicing enhancer (ESE)-dependent splicing activation by bridging together sequence-specific (SR family proteins, SFRS4, SFRS5 and TRA2B/SFRS10) and basal snRNP (SNRP70 and SNRPA1) factors of the spliceosome. Stimulates mRNA 3'-end cleavage independently of the formation of an exon junction complex. Binds both pre-mRNA and spliced mRNA 20-25 nt upstream of exon-exon junctions. Binds RNA and DNA with low sequence specificity and has similar preference for either double- or single-stranded nucleic acid substrates. In Homo sapiens (Human), this protein is Serine/arginine repetitive matrix protein 1 (SRRM1).